A 345-amino-acid polypeptide reads, in one-letter code: Methylthioribose-1-phosphate isomerase (345 aa).

Residues 47 to 49 (RGA), arginine 90, and glutamine 199 contribute to the substrate site. Aspartate 240 serves as the catalytic Proton donor. Substrate is bound at residue 250 to 251 (NK).

Belongs to the eIF-2B alpha/beta/delta subunits family. MtnA subfamily.

It catalyses the reaction 5-(methylsulfanyl)-alpha-D-ribose 1-phosphate = 5-(methylsulfanyl)-D-ribulose 1-phosphate. The protein operates within amino-acid biosynthesis; L-methionine biosynthesis via salvage pathway; L-methionine from S-methyl-5-thio-alpha-D-ribose 1-phosphate: step 1/6. Functionally, catalyzes the interconversion of methylthioribose-1-phosphate (MTR-1-P) into methylthioribulose-1-phosphate (MTRu-1-P). In Crocosphaera subtropica (strain ATCC 51142 / BH68) (Cyanothece sp. (strain ATCC 51142)), this protein is Methylthioribose-1-phosphate isomerase.